A 310-amino-acid polypeptide reads, in one-letter code: ADP-L-glycero-D-manno-heptose-6-epimerase (310 aa).

NADP(+) contacts are provided by residues 10–11 (FI), 31–32 (DN), lysine 38, lysine 53, 75–79 (EGACS), and asparagine 92. The active-site Proton acceptor is tyrosine 140. Residue lysine 144 participates in NADP(+) binding. Asparagine 169 lines the substrate pocket. Positions 170 and 178 each coordinate NADP(+). Lysine 178 acts as the Proton acceptor in catalysis. Substrate is bound by residues serine 180, histidine 187, 201 to 204 (FEGS), arginine 209, and tyrosine 272.

Belongs to the NAD(P)-dependent epimerase/dehydratase family. HldD subfamily. As to quaternary structure, homopentamer. Requires NADP(+) as cofactor.

The enzyme catalyses ADP-D-glycero-beta-D-manno-heptose = ADP-L-glycero-beta-D-manno-heptose. It participates in nucleotide-sugar biosynthesis; ADP-L-glycero-beta-D-manno-heptose biosynthesis; ADP-L-glycero-beta-D-manno-heptose from D-glycero-beta-D-manno-heptose 7-phosphate: step 4/4. Its function is as follows. Catalyzes the interconversion between ADP-D-glycero-beta-D-manno-heptose and ADP-L-glycero-beta-D-manno-heptose via an epimerization at carbon 6 of the heptose. In Cronobacter sakazakii (strain ATCC BAA-894) (Enterobacter sakazakii), this protein is ADP-L-glycero-D-manno-heptose-6-epimerase.